Reading from the N-terminus, the 223-residue chain is Translation initiation factor 6 (223 aa).

The protein belongs to the eIF-6 family.

Functionally, binds to the 50S ribosomal subunit and prevents its association with the 30S ribosomal subunit to form the 70S initiation complex. The chain is Translation initiation factor 6 from Sulfolobus acidocaldarius (strain ATCC 33909 / DSM 639 / JCM 8929 / NBRC 15157 / NCIMB 11770).